Here is a 328-residue protein sequence, read N- to C-terminus: Oligopeptide transport ATP-binding protein AppD (328 aa).

An ABC transporter domain is found at 5–256 (LEVNNLKTYF…PLHPYTEGLL (252 aa)). 41-48 (GESGSGKS) is an ATP binding site.

It belongs to the ABC transporter superfamily.

Its subcellular location is the cell membrane. This protein is a component of an oligopeptide permease, a binding protein-dependent transport system. This APP system can completely substitute for the OPP system in both sporulation and genetic competence, though, unlike OPP, is incapable of transporting tripeptides. Probably responsible for energy coupling to the transport system. The chain is Oligopeptide transport ATP-binding protein AppD (appD) from Bacillus subtilis (strain 168).